Here is a 32-residue protein sequence, read N- to C-terminus: DNA-binding protein HU (32 aa).

This sequence belongs to the bacterial histone-like protein family.

Its function is as follows. Histone-like DNA-binding protein which is capable of wrapping DNA to stabilize it, and thus to prevent its denaturation under extreme environmental conditions. In Synechocystis sp. (strain PCC 6701), this protein is DNA-binding protein HU (hup).